Here is a 562-residue protein sequence, read N- to C-terminus: Alpha-1D adrenergic receptor (562 aa).

The Extracellular portion of the chain corresponds to 1 to 90; the sequence is MTFRDILSVT…VGGLVVSAQG (90 aa). Disordered regions lie at residues 13 to 44 and 50 to 69; these read GPRA…GVPG and AVVG…EAGA. Residues 21 to 44 show a composition bias toward gly residues; the sequence is GGSGAGGGAGTVGPEGPAVGGVPG. Residues asparagine 60 and asparagine 76 are each glycosylated (N-linked (GlcNAc...) asparagine). Residues 91–115 traverse the membrane as a helical segment; sequence VGVGVFLAAFILTAVAGNLLVILSV. Residues 116-127 are Cytoplasmic-facing; sequence ACNRHLQTVTNY. The helical transmembrane segment at 128 to 153 threads the bilayer; it reads FIVNLAVADLLLSAAVLPFSATMEVL. Residues 154 to 163 are Extracellular-facing; that stretch reads GFWPFGRTFC. The chain crosses the membrane as a helical span at residues 164 to 186; it reads DVWAAVDVLCCTASILSLCTISV. The Cytoplasmic portion of the chain corresponds to 187–207; sequence DRYVGVRHSLKYPAIMTERKA. Residues 208–232 traverse the membrane as a helical segment; sequence AAILALLWAVALVVSVGPLLGWKEP. At 233-245 the chain is on the extracellular side; sequence VPPDERFCGITEE. Residues 246 to 269 traverse the membrane as a helical segment; it reads VGYAIFSSVCSFYLPMAVIVVMYC. Residues 270-342 lie on the Cytoplasmic side of the membrane; sequence RVYVVARSTT…KFSREKKAAK (73 aa). A helical membrane pass occupies residues 343–367; it reads TLAIVVGVFVLCWFPFFFVLPLGSL. Over 368–374 the chain is Extracellular; it reads FPQLKPS. Residues 375 to 399 traverse the membrane as a helical segment; sequence EGVFKVIFWLGYFNSCVNPLIYPCS. At 400 to 562 the chain is on the cytoplasmic side; the sequence is SREFKRAFLR…DLSNLRETDI (163 aa). A lipid anchor (S-palmitoyl cysteine) is attached at cysteine 413. The disordered stretch occupies residues 444 to 472; that stretch reads QPAHRTPRGSPSPHCTPRPGLRRHAGGAG.

This sequence belongs to the G-protein coupled receptor 1 family. Adrenergic receptor subfamily. ADRA1D sub-subfamily. In terms of assembly, interacts with FLNA (via filamin repeat 21); increases PKA-mediated phosphorylation of FLNA. In terms of processing, palmitoylated. Palmitoylation by ZDHHC21 may increase the expression of the receptor and regulate downstream signaling.

It is found in the cell membrane. Functionally, this alpha-adrenergic receptor mediates its effect through the influx of extracellular calcium. The polypeptide is Alpha-1D adrenergic receptor (Adra1d) (Mus musculus (Mouse)).